A 135-amino-acid polypeptide reads, in one-letter code: MPPKSRTAAGAKKVRRKEKKNVAMGEAHIKSTFNNTIVTITDPTGAVISWASAGTVGFKGSRKSTPFAAQMAAEAAGRRAMEHGMKKIDVFVKGPGSGRETAIRSLGAIGLEVGTIQDVTPTPHNGCRPPKRRRV.

The disordered stretch occupies residues 1 to 22 (MPPKSRTAAGAKKVRRKEKKNV).

Belongs to the universal ribosomal protein uS11 family. As to quaternary structure, part of the 30S ribosomal subunit. Interacts with proteins S7 and S18. Binds to IF-3.

Functionally, located on the platform of the 30S subunit, it bridges several disparate RNA helices of the 16S rRNA. Forms part of the Shine-Dalgarno cleft in the 70S ribosome. This chain is Small ribosomal subunit protein uS11, found in Nocardioides sp. (strain ATCC BAA-499 / JS614).